Reading from the N-terminus, the 483-residue chain is Glutamyl-tRNA(Gln) amidotransferase subunit A (483 aa).

Active-site charge relay system residues include Lys76 and Ser151. The active-site Acyl-ester intermediate is Ser175.

It belongs to the amidase family. GatA subfamily. As to quaternary structure, heterotrimer of A, B and C subunits.

It catalyses the reaction L-glutamyl-tRNA(Gln) + L-glutamine + ATP + H2O = L-glutaminyl-tRNA(Gln) + L-glutamate + ADP + phosphate + H(+). Allows the formation of correctly charged Gln-tRNA(Gln) through the transamidation of misacylated Glu-tRNA(Gln) in organisms which lack glutaminyl-tRNA synthetase. The reaction takes place in the presence of glutamine and ATP through an activated gamma-phospho-Glu-tRNA(Gln). This is Glutamyl-tRNA(Gln) amidotransferase subunit A from Nitrosococcus oceani (strain ATCC 19707 / BCRC 17464 / JCM 30415 / NCIMB 11848 / C-107).